The primary structure comprises 137 residues: Nucleoside diphosphate kinase (137 aa).

ATP-binding residues include lysine 9, phenylalanine 57, arginine 85, threonine 91, arginine 102, and asparagine 112. The active-site Pros-phosphohistidine intermediate is the histidine 115.

It belongs to the NDK family. Homotetramer. Requires Mg(2+) as cofactor.

The protein localises to the cytoplasm. It carries out the reaction a 2'-deoxyribonucleoside 5'-diphosphate + ATP = a 2'-deoxyribonucleoside 5'-triphosphate + ADP. The catalysed reaction is a ribonucleoside 5'-diphosphate + ATP = a ribonucleoside 5'-triphosphate + ADP. Its function is as follows. Major role in the synthesis of nucleoside triphosphates other than ATP. The ATP gamma phosphate is transferred to the NDP beta phosphate via a ping-pong mechanism, using a phosphorylated active-site intermediate. The polypeptide is Nucleoside diphosphate kinase (Geobacter sulfurreducens (strain ATCC 51573 / DSM 12127 / PCA)).